Here is a 310-residue protein sequence, read N- to C-terminus: Homeobox protein knotted-1-like 2 (310 aa).

Positions 178 to 208 (SDDGAVSSDEELREDDDIAADDSQQRSNDRD) are disordered. Residues 185–197 (SDEELREDDDIAA) show a composition bias toward acidic residues. The ELK domain occupies 208 to 228 (DLKDQLLRKFGSHISSLKLEF). The homeobox; TALE-type DNA-binding region spans 229–292 (SKKKKKGKLP…NQRKRHWKPS (64 aa)).

This sequence belongs to the TALE/KNOX homeobox family. May form heterodimeric complex with the TALE/BELL protein BEL1, BLH1 and BLH2. Interacts with OFP12 and OFP14. Interacts with BZIP30. As to expression, expressed predominantly in shoot apices of seedlings, in the receptacle and developing pistil of flowers and in axillary buds of inflorescence stems.

It is found in the nucleus. In terms of biological role, may play a role in meristem function, and may be involved in maintaining cells in an undifferentiated, meristematic state. Probably binds to the DNA sequence 5'-TGAC-3'. The protein is Homeobox protein knotted-1-like 2 (KNAT2) of Arabidopsis thaliana (Mouse-ear cress).